Reading from the N-terminus, the 594-residue chain is Elongation factor 4 (594 aa).

A tr-type G domain is found at 2-184 (KNIRNFSIIA…TIVAKVPAPE (183 aa)). GTP is bound by residues 14-19 (DHGKST) and 131-134 (NKID).

The protein belongs to the TRAFAC class translation factor GTPase superfamily. Classic translation factor GTPase family. LepA subfamily.

It localises to the cell inner membrane. It carries out the reaction GTP + H2O = GDP + phosphate + H(+). Required for accurate and efficient protein synthesis under certain stress conditions. May act as a fidelity factor of the translation reaction, by catalyzing a one-codon backward translocation of tRNAs on improperly translocated ribosomes. Back-translocation proceeds from a post-translocation (POST) complex to a pre-translocation (PRE) complex, thus giving elongation factor G a second chance to translocate the tRNAs correctly. Binds to ribosomes in a GTP-dependent manner. This Francisella tularensis subsp. novicida (strain U112) protein is Elongation factor 4.